The chain runs to 107 residues: uncharacterized protein (107 aa).

Positions G88–R107 are disordered.

The protein resides in the virion. This is an uncharacterized protein from Acanthamoeba polyphaga (Amoeba).